The sequence spans 421 residues: UDP-N-acetylglucosamine 1-carboxyvinyltransferase (421 aa).

22 to 23 (KN) is a phosphoenolpyruvate binding site. Arginine 93 contributes to the UDP-N-acetyl-alpha-D-glucosamine binding site. The active-site Proton donor is the cysteine 117. Position 117 is a 2-(S-cysteinyl)pyruvic acid O-phosphothioketal (cysteine 117). UDP-N-acetyl-alpha-D-glucosamine-binding positions include 122–126 (RPVDL), aspartate 308, and valine 330.

Belongs to the EPSP synthase family. MurA subfamily.

It localises to the cytoplasm. The catalysed reaction is phosphoenolpyruvate + UDP-N-acetyl-alpha-D-glucosamine = UDP-N-acetyl-3-O-(1-carboxyvinyl)-alpha-D-glucosamine + phosphate. It functions in the pathway cell wall biogenesis; peptidoglycan biosynthesis. Cell wall formation. Adds enolpyruvyl to UDP-N-acetylglucosamine. In Pseudomonas aeruginosa (strain LESB58), this protein is UDP-N-acetylglucosamine 1-carboxyvinyltransferase.